Here is a 458-residue protein sequence, read N- to C-terminus: Light-independent protochlorophyllide reductase subunit N (458 aa).

Positions 22, 47, and 107 each coordinate [4Fe-4S] cluster.

This sequence belongs to the BchN/ChlN family. As to quaternary structure, protochlorophyllide reductase is composed of three subunits; ChlL, ChlN and ChlB. Forms a heterotetramer of two ChlB and two ChlN subunits. It depends on [4Fe-4S] cluster as a cofactor.

It is found in the plastid. The protein resides in the chloroplast. It carries out the reaction chlorophyllide a + oxidized 2[4Fe-4S]-[ferredoxin] + 2 ADP + 2 phosphate = protochlorophyllide a + reduced 2[4Fe-4S]-[ferredoxin] + 2 ATP + 2 H2O. It functions in the pathway porphyrin-containing compound metabolism; chlorophyll biosynthesis (light-independent). In terms of biological role, component of the dark-operative protochlorophyllide reductase (DPOR) that uses Mg-ATP and reduced ferredoxin to reduce ring D of protochlorophyllide (Pchlide) to form chlorophyllide a (Chlide). This reaction is light-independent. The NB-protein (ChlN-ChlB) is the catalytic component of the complex. The protein is Light-independent protochlorophyllide reductase subunit N of Chaetosphaeridium globosum (Charophycean green alga).